Consider the following 361-residue polypeptide: ATP phosphoribosyltransferase regulatory subunit (361 aa).

The protein belongs to the class-II aminoacyl-tRNA synthetase family. HisZ subfamily. As to quaternary structure, heteromultimer composed of HisG and HisZ subunits.

The protein resides in the cytoplasm. It functions in the pathway amino-acid biosynthesis; L-histidine biosynthesis; L-histidine from 5-phospho-alpha-D-ribose 1-diphosphate: step 1/9. Functionally, required for the first step of histidine biosynthesis. May allow the feedback regulation of ATP phosphoribosyltransferase activity by histidine. The sequence is that of ATP phosphoribosyltransferase regulatory subunit from Thermus thermophilus (strain ATCC 27634 / DSM 579 / HB8).